The following is a 466-amino-acid chain: Keratin, type II cytoskeletal 7 (466 aa).

At Ser2 the chain carries N-acetylserine. Ser2 and Ser7 each carry phosphoserine. The tract at residues 2 to 91 (SLHFGSQVFS…DPSIQQVRQE (90 aa)) is head. O-linked (GlcNAc) serine glycosylation is present at Ser12. Residue Arg20 is modified to Dimethylated arginine; alternate. Arg20 bears the Omega-N-methylarginine; alternate mark. 3 positions are modified to phosphoserine: Ser54, Ser72, and Ser84. The tract at residues 91-127 (EEREQIKTLNNKFASFIDKVRFLEQQNKLLETKWALL) is coil 1A. The IF rod domain maps to 92-404 (EREQIKTLNN…KLLEGEESRL (313 aa)). At Thr98 the chain carries Phosphothreonine. The tract at residues 128–145 (QEQKSAKSNRLPGIFEAQ) is linker 1. A Glycyl lysine isopeptide (Lys-Gly) (interchain with G-Cter in SUMO2) cross-link involves residue Lys131. A coil 1B region spans residues 146–237 (IAGLRKQLEA…TLYEQELKEL (92 aa)). Position 180 is an N6-acetyllysine (Lys180). Positions 238–261 (QSEVSDTSVVLSMDNNRSLDLDSI) are linker 12. Position 255 is a phosphoserine (Ser255). The segment at 262-400 (IAEVKAQYEE…ATYRKLLEGE (139 aa)) is coil 2. Glycyl lysine isopeptide (Lys-Gly) (interchain with G-Cter in SUMO2) cross-links involve residues Lys266 and Lys287. Thr290 carries the phosphothreonine modification. Glycyl lysine isopeptide (Lys-Gly) (interchain with G-Cter in SUMO2) cross-links involve residues Lys297 and Lys332. Positions 401–466 (ESRLTGDGVG…TSATSRSPRK (66 aa)) are tail.

It belongs to the intermediate filament family. As to quaternary structure, heterotetramer of two type I and two type II keratins. Interacts with eukaryotic translation initiator factor 3 (eIF3) subunit EIF3S10. Interacts with GPER1. Post-translationally, arg-20 is dimethylated, probably to asymmetric dimethylarginine.

In terms of biological role, blocks interferon-dependent interphase and stimulates DNA synthesis in cells. The sequence is that of Keratin, type II cytoskeletal 7 from Bos taurus (Bovine).